Here is a 156-residue protein sequence, read N- to C-terminus: ATP synthase subunit b (156 aa).

A helical transmembrane segment spans residues 13–33 (AFIIFVWCCMKFVWPPLMAAI).

The protein belongs to the ATPase B chain family. In terms of assembly, F-type ATPases have 2 components, F(1) - the catalytic core - and F(0) - the membrane proton channel. F(1) has five subunits: alpha(3), beta(3), gamma(1), delta(1), epsilon(1). F(0) has three main subunits: a(1), b(2) and c(10-14). The alpha and beta chains form an alternating ring which encloses part of the gamma chain. F(1) is attached to F(0) by a central stalk formed by the gamma and epsilon chains, while a peripheral stalk is formed by the delta and b chains.

Its subcellular location is the cell inner membrane. In terms of biological role, f(1)F(0) ATP synthase produces ATP from ADP in the presence of a proton or sodium gradient. F-type ATPases consist of two structural domains, F(1) containing the extramembraneous catalytic core and F(0) containing the membrane proton channel, linked together by a central stalk and a peripheral stalk. During catalysis, ATP synthesis in the catalytic domain of F(1) is coupled via a rotary mechanism of the central stalk subunits to proton translocation. Component of the F(0) channel, it forms part of the peripheral stalk, linking F(1) to F(0). The polypeptide is ATP synthase subunit b (Aeromonas salmonicida (strain A449)).